Consider the following 119-residue polypeptide: Fluoride-specific ion channel FluC (119 aa).

Helical transmembrane passes span 5-25, 30-50, 59-79, and 92-112; these read IIPL…LNLA, LSPA…IGIF, WKLL…GFSL, and SALA…WLGL. Na(+)-binding residues include Gly-69 and Thr-72.

Belongs to the fluoride channel Fluc/FEX (TC 1.A.43) family.

It is found in the cell inner membrane. The enzyme catalyses fluoride(in) = fluoride(out). With respect to regulation, na(+) is not transported, but it plays an essential structural role and its presence is essential for fluoride channel function. Fluoride-specific ion channel. Important for reducing fluoride concentration in the cell, thus reducing its toxicity. This Neisseria meningitidis serogroup A / serotype 4A (strain DSM 15465 / Z2491) protein is Fluoride-specific ion channel FluC.